The sequence spans 1354 residues: Rho-associated protein kinase 1 (1354 aa).

Residue Ser-2 is modified to N-acetylserine. Positions 76–338 (YEVVKVIGRG…VEEIKRHLFF (263 aa)) constitute a Protein kinase domain. Residues 82-90 (IGRGAFGEV) and Lys-105 each bind ATP. The active-site Proton acceptor is the Asp-198. The region spanning 341–409 (DQWAWETLRD…YSNRRYLSPA (69 aa)) is the AGC-kinase C-terminal domain. Residues 368–727 (FDDLEEDKGD…KKLKEEREAR (360 aa)) are interaction with FHOD1. Positions 422–692 (KSLQENLQKT…RLEQEVNEHK (271 aa)) form a coiled coil. Positions 479 to 556 (STVSQIEKEK…LEEANDLLRT (78 aa)) constitute an REM-1 domain. An SHROOM3 binding region spans residues 707–946 (EAKSVAMCEM…AVSRLEETNS (240 aa)). In terms of domain architecture, RhoBD spans 949 to 1015 (TKDIELLRKE…LAEIMNRKDF (67 aa)). The segment at 998-1010 (LKTQAVNKLAEIM) is RHOA binding. A coiled-coil region spans residues 1011–1102 (NRKDFKIDKK…KLSDLSDSTS (92 aa)). The disordered stretch occupies residues 1101–1120 (TSVASFPSADETDPNLPESR). Ser-1105 and Ser-1108 each carry phosphoserine. Positions 1115–1354 (NLPESRIEGW…VVKNTSGKTS (240 aa)) are auto-inhibitory. A PH domain is found at 1118-1317 (ESRIEGWLSV…WVTHLVKKIP (200 aa)). The segment at 1228–1283 (GHEFIPTLYHFPANCEACAKPLWHVFKPPPALECRRCHVKCHRDHLDKKEDLISPC) adopts a Phorbol-ester/DAG-type zinc-finger fold. Ser-1328 is subject to Phosphoserine. Positions 1333 to 1354 (STRSTANQSFRKVVKNTSGKTS) are disordered.

It belongs to the protein kinase superfamily. AGC Ser/Thr protein kinase family. Homodimer. Interacts with RHOA (activated by GTP), RHOB, RHOC, GEM, MYLC2B, RHOE, PPP1R12A, LIMK1, LIMK2, TSG101, CHORDC1, DAPK3, PFN1, PTEN and JIP3. Interacts with FHOD1 in a Src-dependent manner. Interacts with ITGB1BP1 (via N-terminus and PTB domain). Interacts with SHROOM3. The cofactor is Mg(2+). In terms of processing, autophosphorylated on serine and threonine residues. Cleaved by caspase-3 during apoptosis. This leads to constitutive activation of the kinase and membrane blebbing. Detected in corneal epithelium.

The protein resides in the cytoplasm. The protein localises to the cytoskeleton. It localises to the microtubule organizing center. It is found in the centrosome. Its subcellular location is the centriole. The protein resides in the golgi apparatus membrane. The protein localises to the cell projection. It localises to the bleb. It is found in the cell membrane. Its subcellular location is the lamellipodium. The protein resides in the ruffle. It carries out the reaction L-seryl-[protein] + ATP = O-phospho-L-seryl-[protein] + ADP + H(+). It catalyses the reaction L-threonyl-[protein] + ATP = O-phospho-L-threonyl-[protein] + ADP + H(+). With respect to regulation, activated by RHOA binding. Inhibited by Y-27632. Functionally, protein kinase which is a key regulator of the actin cytoskeleton and cell polarity. Involved in regulation of smooth muscle contraction, actin cytoskeleton organization, stress fiber and focal adhesion formation, neurite retraction, cell adhesion and motility via phosphorylation of DAPK3, GFAP, LIMK1, LIMK2, MYL9/MLC2, TPPP, PFN1 and PPP1R12A. Phosphorylates FHOD1 and acts synergistically with it to promote SRC-dependent non-apoptotic plasma membrane blebbing. Phosphorylates JIP3 and regulates the recruitment of JNK to JIP3 upon UVB-induced stress. Acts as a suppressor of inflammatory cell migration by regulating PTEN phosphorylation and stability. Acts as a negative regulator of VEGF-induced angiogenic endothelial cell activation. Required for centrosome positioning and centrosome-dependent exit from mitosis. Plays a role in terminal erythroid differentiation. Inhibits podocyte motility via regulation of actin cytoskeletal dynamics and phosphorylation of CFL1. Promotes keratinocyte terminal differentiation. Involved in osteoblast compaction through the fibronectin fibrillogenesis cell-mediated matrix assembly process, essential for osteoblast mineralization. May regulate closure of the eyelids and ventral body wall by inducing the assembly of actomyosin bundles. The protein is Rho-associated protein kinase 1 (ROCK1) of Oryctolagus cuniculus (Rabbit).